The primary structure comprises 139 residues: Histone H2A (139 aa).

The interval 1–27 (MSGKGKAGKSGGKAGSETKSMSRSSKA) is disordered. Ser2 is subject to N-acetylserine. Lys9 and Lys13 each carry N6-acetyllysine. The span at 17–27 (ETKSMSRSSKA) shows a compositional bias: polar residues. Gln110 is modified (N5-methylglutamine). The tract at residues 119–139 (PELLPSKSSKGKKDEGVSQEL) is disordered. Over residues 129–139 (GKKDEGVSQEL) the composition is skewed to basic and acidic residues. Phosphoserine is present on Ser136. Positions 136 to 137 (SQ) match the [ST]-Q motif motif.

It belongs to the histone H2A family. The nucleosome is a histone octamer containing two molecules each of H2A, H2B, H3 and H4 assembled in one H3-H4 heterotetramer and two H2A-H2B heterodimers. The octamer wraps approximately 147 bp of DNA. In terms of processing, phosphorylated to form H2AS128ph (gamma-H2A) in response to DNA double-strand breaks (DSBs) generated by exogenous genotoxic agents and by stalled replication forks. Phosphorylation is dependent on the DNA damage checkpoint kinases MEC1/ATR and TEL1/ATM, spreads on either side of a detected DSB site and may mark the surrounding chromatin for recruitment of proteins required for DNA damage signaling and repair. Gamma-H2A is removed from the DNA prior to the strand invasion-primer extension step of the repair process and subsequently dephosphorylated. Dephosphorylation is necessary for efficient recovery from the DNA damage checkpoint. Post-translationally, acetylated by ESA1 to form H2AK4ac and H2AK7ac.

The protein localises to the nucleus. Its subcellular location is the chromosome. Its function is as follows. Core component of nucleosome which plays a central role in DNA double strand break (DSB) repair. Nucleosomes wrap and compact DNA into chromatin, limiting DNA accessibility to the cellular machineries which require DNA as a template. Histones thereby play a central role in transcription regulation, DNA repair, DNA replication and chromosomal stability. DNA accessibility is regulated via a complex set of post-translational modifications of histones, also called histone code, and nucleosome remodeling. The polypeptide is Histone H2A (Agaricus bisporus (White button mushroom)).